Here is a 216-residue protein sequence, read N- to C-terminus: Pyrophosphatase PpaX (216 aa).

Aspartate 9 acts as the Nucleophile in catalysis.

The protein belongs to the HAD-like hydrolase superfamily. PpaX family. Mg(2+) is required as a cofactor.

The enzyme catalyses diphosphate + H2O = 2 phosphate + H(+). Functionally, hydrolyzes pyrophosphate formed during P-Ser-HPr dephosphorylation by HPrK/P. Might play a role in controlling the intracellular pyrophosphate pool. The sequence is that of Pyrophosphatase PpaX from Bacillus cereus (strain G9842).